Reading from the N-terminus, the 344-residue chain is Ferrochelatase (344 aa).

2 residues coordinate Fe cation: H211 and E292.

It belongs to the ferrochelatase family.

The protein localises to the cytoplasm. It catalyses the reaction heme b + 2 H(+) = protoporphyrin IX + Fe(2+). The protein operates within porphyrin-containing compound metabolism; protoheme biosynthesis; protoheme from protoporphyrin-IX: step 1/1. Functionally, catalyzes the ferrous insertion into protoporphyrin IX. The chain is Ferrochelatase from Methylobacillus flagellatus (strain ATCC 51484 / DSM 6875 / VKM B-1610 / KT).